Reading from the N-terminus, the 365-residue chain is 3-amino-4-hydroxybenzoate 4-O-methyltransferase (365 aa).

Residues 1-18 are compositionally biased toward polar residues; it reads MTVPENAQHTAPDQTQHT. Positions 1–32 are disordered; sequence MTVPENAQHTAPDQTQHTAPDRTRQAQQAAPD. S-adenosyl-L-methionine is bound by residues aspartate 227, 253–255, and arginine 270; that span reads GDF. Residue histidine 273 is the Proton acceptor of the active site.

It belongs to the class I-like SAM-binding methyltransferase superfamily. Cation-independent O-methyltransferase family.

The enzyme catalyses 3-amino-2,4-dihydroxybenzoate + S-adenosyl-L-methionine = 3-amino-2-hydroxy-4-methoxybenzoate + S-adenosyl-L-homocysteine + H(+). It functions in the pathway antibiotic biosynthesis. Its function is as follows. Part of a gene cluster involved in the biosynthesis of cremeomycin, a light-sensitive o-diazoquinone with antibacterial and antiproliferative effects. Catalyzes the methylation of the C4 hydroxyl group of 3-amino-2,4-dihydroxybenzoate (3,2,4-ADHBA) to form 3-amino-2-hydroxy-4-methoxybenzoate (3,2,4-AHMBA). In vitro, can also catalyze the methylation of 3-amino-4-hydroxybenzoate (3,4-AHBA). This is 3-amino-4-hydroxybenzoate 4-O-methyltransferase from Streptomyces cremeus.